The following is a 58-amino-acid chain: Photosystem II reaction center protein K (58 aa).

The propeptide occupies 1–21 (MFNAYLDTVLDLSANGTVILA). A helical membrane pass occupies residues 29-49 (IFDPIVDVMPIIPVFFLLLAF).

It belongs to the PsbK family. PSII is composed of 1 copy each of membrane proteins PsbA, PsbB, PsbC, PsbD, PsbE, PsbF, PsbH, PsbI, PsbJ, PsbK, PsbL, PsbM, PsbT, PsbX, PsbY, PsbZ, Psb30/Ycf12, at least 3 peripheral proteins of the oxygen-evolving complex and a large number of cofactors. It forms dimeric complexes.

The protein resides in the plastid. It localises to the chloroplast thylakoid membrane. One of the components of the core complex of photosystem II (PSII). PSII is a light-driven water:plastoquinone oxidoreductase that uses light energy to abstract electrons from H(2)O, generating O(2) and a proton gradient subsequently used for ATP formation. It consists of a core antenna complex that captures photons, and an electron transfer chain that converts photonic excitation into a charge separation. This is Photosystem II reaction center protein K from Staurastrum punctulatum (Green alga).